The sequence spans 314 residues: Olfactory receptor 1C1 (314 aa).

At 1 to 25 (MEKRNLTVVREFVLLGLPSSAEQQH) the chain is on the extracellular side. A helical transmembrane segment spans residues 26–49 (LLSVLFLCMYLATTLGNMLIIATI). Residues 50–57 (GFDSHLHS) are Cytoplasmic-facing. A helical transmembrane segment spans residues 58-79 (PMYFFLSNLAFVDICFTSTTVP). The Extracellular portion of the chain corresponds to 80–100 (QMVVNILTGTKTISFAGCLTQ). Cys97 and Cys189 are disulfide-bonded. The helical transmembrane segment at 101-120 (LFFFVSFVNMDSLLLCVMAY) threads the bilayer. At 121-139 (DRYVAICHPLHYTARMNLC) the chain is on the cytoplasmic side. A helical transmembrane segment spans residues 140–158 (LCVQLVAGLWLVTYLHALL). The Extracellular portion of the chain corresponds to 159-195 (HTVLIAQLSFCASNIIHHFFCDLNPLLQLSCSDVSFN). The helical transmembrane segment at 196 to 219 (VMIIFAVGGLLALTPLVCILVSYG) threads the bilayer. The Cytoplasmic segment spans residues 220–236 (LIFSTVLKITSTQGKQR). Residues 237 to 259 (AVSTCSCHLSVVVLFYGTAIAVY) form a helical membrane-spanning segment. Over 260–272 (FSPSSPHMPESDT) the chain is Extracellular. The helical transmembrane segment at 273–292 (LSTIMYSMVAPMLNPFIYTL) threads the bilayer. At 293–314 (RNRDMKRGLQKMLLKCTVFQQQ) the chain is on the cytoplasmic side.

Belongs to the G-protein coupled receptor 1 family.

It is found in the cell membrane. In terms of biological role, odorant receptor. This chain is Olfactory receptor 1C1 (OR1C1), found in Homo sapiens (Human).